We begin with the raw amino-acid sequence, 164 residues long: HTH-type transcriptional regulator IscR (164 aa).

The region spanning 2-131 is the HTH rrf2-type domain; sequence RLTSKGRYAV…NNITLAELVN (130 aa). The segment at residues 28–51 is a DNA-binding region (H-T-H motif); that stretch reads LADISERQGISLSYLEQLFSRLRK. Cys92, Cys98, and Cys104 together coordinate [2Fe-2S] cluster. The interval 143-164 is disordered; sequence NNDTRRTANGRPQETINVNLRA. Residues 152–164 show a composition bias toward polar residues; that stretch reads GRPQETINVNLRA.

[2Fe-2S] cluster serves as cofactor.

In terms of biological role, regulates the transcription of several operons and genes involved in the biogenesis of Fe-S clusters and Fe-S-containing proteins. This is HTH-type transcriptional regulator IscR from Yersinia pseudotuberculosis serotype O:1b (strain IP 31758).